We begin with the raw amino-acid sequence, 347 residues long: Spermidine/putrescine import ATP-binding protein PotA (347 aa).

Positions 6–236 constitute an ABC transporter domain; that stretch reads IELRDISKHY…PKNSFVAKFI (231 aa). 38 to 45 serves as a coordination point for ATP; that stretch reads GPSGCGKT.

The protein belongs to the ABC transporter superfamily. Spermidine/putrescine importer (TC 3.A.1.11.1) family. In terms of assembly, the complex is composed of two ATP-binding proteins (PotA), two transmembrane proteins (PotB and PotC) and a solute-binding protein (PotD).

Its subcellular location is the cell membrane. The catalysed reaction is ATP + H2O + polyamine-[polyamine-binding protein]Side 1 = ADP + phosphate + polyamineSide 2 + [polyamine-binding protein]Side 1.. In terms of biological role, part of the ABC transporter complex PotABCD involved in spermidine/putrescine import. Responsible for energy coupling to the transport system. The polypeptide is Spermidine/putrescine import ATP-binding protein PotA (Clostridioides difficile (strain 630) (Peptoclostridium difficile)).